The chain runs to 332 residues: Beta-chimaerin (332 aa).

Residues 78-128 (THNFKVHTFRGPHWCEYCANFMWGLIAQGVRCSDCGLNVHKQCSKHVPNDC) form a Phorbol-ester/DAG-type zinc finger. Positions 141-332 (CDLTTLVKAH…ILIENEDVLF (192 aa)) constitute a Rho-GAP domain.

The protein resides in the membrane. In the inactive state, the N terminus protrudes into the active site of the Rho-GAP domain, sterically blocking Rac binding. Phospholipid binding to the Phorbol-ester/DAG-type zinc-finger/C1 domain triggers the cooperative dissociation of these interactions, allowing the N-terminus to move out of the active site and thereby activating the enzyme. Functionally, GTPase-activating protein for p21-rac. In Mus musculus (Mouse), this protein is Beta-chimaerin (Chn2).